The chain runs to 190 residues: Corticoliberin (190 aa).

Positions 1 to 24 (MRLPLLVSVGVLLVALLPSPPCRA) are cleaved as a signal peptide. Positions 25–147 (LLSRGPIPGA…QEAPAARKRR (123 aa)) are excised as a propeptide. 2 disordered regions span residues 33 to 53 (GARQ…LPQP) and 115 to 151 (PRRP…SQEP). Over residues 41 to 53 (PQPLSFFQPLPQP) the composition is skewed to low complexity. Alanine amide is present on Ala-188.

This sequence belongs to the sauvagine/corticotropin-releasing factor/urotensin I family. Interacts (via C-terminus) with CRFR1 (via N-terminal extracellular domain). Produced by the hypothalamus.

It is found in the secreted. In terms of biological role, hormone regulating the release of corticotropin from pituitary gland. Induces NLRP6 in intestinal epithelial cells, hence may influence gut microbiota profile. The sequence is that of Corticoliberin (CRH) from Ovis aries (Sheep).